The chain runs to 444 residues: MREIVHIQAGQCGNQIGAKFWEVISDEHGIDPTGTYHGDSDLQLDRISVYYNEATGGKYVPRAILVDLEPGTMDSVRSGPFGQIFRPDNFVFGQSGAGNNWAKGHYTEGAELVDSVLDVVRKEAESCDCLQGFQLTHSLGGGTGSGMGTLLISKIREEYPDRIMNTFSVVPSPKVSDTVVEPYNATLSVHQLVENTDETYCIDNEALYDICFRTLKLTTPTYGDLNHLVSATMSGVTTCLRFPGQLNADLRKLAVNMVPFPRLHFFMPGFAPLTSRGSQQYRALTVPELTQQVFDAKNMMAACDPRHGRYLTVAAVFRGRMSMKEVDEQMLNVQNKNSSYFVEWIPNNVKTAVCDIPPRGLKMAVTFIGNSTAIQELFKRISEQFTAMFRRKAFLHWYTGEGMDEMEFTEAESNMNDLVSEYQQYQDATAEEEEDFNEEAEEEA.

An MREI motif motif is present at residues 1–4; that stretch reads MREI. Positions 11, 69, 138, 142, 143, 144, 204, and 226 each coordinate GTP. Mg(2+) is bound at residue glutamate 69. The segment at 421-444 is disordered; the sequence is EYQQYQDATAEEEEDFNEEAEEEA. Residues 429–444 are compositionally biased toward acidic residues; the sequence is TAEEEEDFNEEAEEEA. Glutamate 438 is modified (5-glutamyl polyglutamate).

Belongs to the tubulin family. As to quaternary structure, dimer of alpha and beta chains. A typical microtubule is a hollow water-filled tube with an outer diameter of 25 nm and an inner diameter of 15 nM. Alpha-beta heterodimers associate head-to-tail to form protofilaments running lengthwise along the microtubule wall with the beta-tubulin subunit facing the microtubule plus end conferring a structural polarity. Microtubules usually have 13 protofilaments but different protofilament numbers can be found in some organisms and specialized cells. The cofactor is Mg(2+). Some glutamate residues at the C-terminus are polyglycylated, resulting in polyglycine chains on the gamma-carboxyl group. Glycylation is mainly limited to tubulin incorporated into axonemes (cilia and flagella) whereas glutamylation is prevalent in neuronal cells, centrioles, axonemes, and the mitotic spindle. Both modifications can coexist on the same protein on adjacent residues, and lowering polyglycylation levels increases polyglutamylation, and reciprocally. The precise function of polyglycylation is still unclear. In terms of processing, some glutamate residues at the C-terminus are polyglutamylated, resulting in polyglutamate chains on the gamma-carboxyl group. Polyglutamylation plays a key role in microtubule severing by spastin (SPAST). SPAST preferentially recognizes and acts on microtubules decorated with short polyglutamate tails: severing activity by SPAST increases as the number of glutamates per tubulin rises from one to eight, but decreases beyond this glutamylation threshold.

It localises to the cytoplasm. The protein localises to the cytoskeleton. Its function is as follows. Tubulin is the major constituent of microtubules, a cylinder consisting of laterally associated linear protofilaments composed of alpha- and beta-tubulin heterodimers. Microtubules grow by the addition of GTP-tubulin dimers to the microtubule end, where a stabilizing cap forms. Below the cap, tubulin dimers are in GDP-bound state, owing to GTPase activity of alpha-tubulin. In Xenopus laevis (African clawed frog), this protein is Tubulin beta chain (tubb).